The chain runs to 210 residues: Putative protein-lysine deacylase ABHD14B (210 aa).

An N-acetylalanine modification is found at A2. The residue at position 91 (S91) is a Phosphoserine. Catalysis depends on charge relay system residues S111, D162, and H188.

Belongs to the AB hydrolase superfamily. ABHD14 family. In terms of assembly, may interact with TAF1. Ubiquitous. Detected in spleen, thymus, prostate, testis, ovary, small intestine, colon, peripheral blood leukocyte, heart, placenta, lung, liver, skeletal muscle, pancreas and kidney.

Its subcellular location is the cytoplasm. The protein localises to the nucleus. The enzyme catalyses L-lysyl-[protein] + acetyl-CoA = N(6)-acetyl-L-lysyl-[protein] + CoA + H(+). In terms of biological role, acts as an atypical protein-lysine deacetylase in vitro. Catalyzes the deacetylation of lysine residues using CoA as substrate, generating acetyl-CoA and the free amine of protein-lysine residues. Additional experiments are however required to confirm the protein-lysine deacetylase activity in vivo. Has hydrolase activity towards various surrogate p-nitrophenyl (pNp) substrates, such as pNp-butyrate, pNp-acetate and pNp-octanoate in vitro, with a strong preference for pNp-acetate. May activate transcription. In Homo sapiens (Human), this protein is Putative protein-lysine deacylase ABHD14B.